Reading from the N-terminus, the 239-residue chain is Retrotransposon Gag-like protein 6 (239 aa).

A coiled-coil region spans residues 29-69 (LTSLRLTNSALRREASTLRAEKANLTNMLESVMAELTLLRT). A compositionally biased stretch (polar residues) spans 82 to 94 (PISSITSNGTRPM). Disordered stretches follow at residues 82–106 (PISSITSNGTRPMTTPPTSLPEPFS) and 214–239 (TGPCPVHPASNGTSPAPALPARARNL). Positions 228–239 (PAPALPARARNL) are enriched in low complexity.

This sequence belongs to the LDOC1 family.

The sequence is that of Retrotransposon Gag-like protein 6 from Homo sapiens (Human).